We begin with the raw amino-acid sequence, 335 residues long: Eukaryotic translation initiation factor 3 subunit I (335 aa).

WD repeat units lie at residues 8–47 (GHER…RLGT), 50–91 (GHQG…KTWD), 145–184 (CAES…LLFN), 189–228 (EPDL…VMKT), and 286–325 (GHFG…FDFT).

Belongs to the eIF-3 subunit I family. As to quaternary structure, component of the eukaryotic translation initiation factor 3 (eIF-3) complex.

It is found in the cytoplasm. Functionally, component of the eukaryotic translation initiation factor 3 (eIF-3) complex, which is involved in protein synthesis of a specialized repertoire of mRNAs and, together with other initiation factors, stimulates binding of mRNA and methionyl-tRNAi to the 40S ribosome. The eIF-3 complex specifically targets and initiates translation of a subset of mRNAs involved in cell proliferation. This chain is Eukaryotic translation initiation factor 3 subunit I (tif34), found in Sclerotinia sclerotiorum (strain ATCC 18683 / 1980 / Ss-1) (White mold).